A 139-amino-acid chain; its full sequence is Large ribosomal subunit protein uL16c (139 aa).

The tract at residues 1-20 (MLSPKRTKYRKHHRGRMKGK) is disordered.

The protein belongs to the universal ribosomal protein uL16 family. In terms of assembly, part of the 50S ribosomal subunit.

Its subcellular location is the plastid. It is found in the chloroplast. This chain is Large ribosomal subunit protein uL16c, found in Pleurastrum terricola (Filamentous green alga).